We begin with the raw amino-acid sequence, 295 residues long: Acetylglutamate kinase (295 aa).

Substrate-binding positions include 66–67 (GG), Arg-88, and Asn-193.

It belongs to the acetylglutamate kinase family. ArgB subfamily.

The protein localises to the cytoplasm. It catalyses the reaction N-acetyl-L-glutamate + ATP = N-acetyl-L-glutamyl 5-phosphate + ADP. It participates in amino-acid biosynthesis; L-arginine biosynthesis; N(2)-acetyl-L-ornithine from L-glutamate: step 2/4. Its function is as follows. Catalyzes the ATP-dependent phosphorylation of N-acetyl-L-glutamate. The polypeptide is Acetylglutamate kinase (Sinorhizobium fredii (strain NBRC 101917 / NGR234)).